The following is a 337-amino-acid chain: 1-aminocyclopropane-1-carboxylate deaminase (337 aa).

An N6-(pyridoxal phosphate)lysine modification is found at Lys50. Ser77 (nucleophile) is an active-site residue.

Belongs to the ACC deaminase/D-cysteine desulfhydrase family. As to quaternary structure, homotrimer. It depends on pyridoxal 5'-phosphate as a cofactor.

The catalysed reaction is 1-aminocyclopropane-1-carboxylate + H2O = 2-oxobutanoate + NH4(+). Catalyzes a cyclopropane ring-opening reaction, the irreversible conversion of 1-aminocyclopropane-1-carboxylate (ACC) to ammonia and alpha-ketobutyrate. Allows growth on ACC as a nitrogen source. The protein is 1-aminocyclopropane-1-carboxylate deaminase of Rhizobium radiobacter (Agrobacterium tumefaciens).